The following is a 406-amino-acid chain: Argininosuccinate synthase (406 aa).

ATP-binding positions include 10 to 18 and Ala-37; that span reads AYSGGLDTS. Residues Tyr-88 and Ser-93 each coordinate L-citrulline. Gly-118 is a binding site for ATP. The L-aspartate site is built by Thr-120, Asn-124, and Asp-125. Asn-124 is an L-citrulline binding site. L-citrulline is bound by residues Arg-128, Ser-179, Ser-188, Glu-264, and Tyr-276.

Belongs to the argininosuccinate synthase family. Type 1 subfamily. As to quaternary structure, homotetramer.

It is found in the cytoplasm. It catalyses the reaction L-citrulline + L-aspartate + ATP = 2-(N(omega)-L-arginino)succinate + AMP + diphosphate + H(+). Its pathway is amino-acid biosynthesis; L-arginine biosynthesis; L-arginine from L-ornithine and carbamoyl phosphate: step 2/3. The sequence is that of Argininosuccinate synthase from Azotobacter vinelandii (strain DJ / ATCC BAA-1303).